The following is a 377-amino-acid chain: Anhydro-N-acetylmuramic acid kinase (377 aa).

Residue 14–21 (GTSLDGVD) coordinates ATP.

This sequence belongs to the anhydro-N-acetylmuramic acid kinase family.

It carries out the reaction 1,6-anhydro-N-acetyl-beta-muramate + ATP + H2O = N-acetyl-D-muramate 6-phosphate + ADP + H(+). Its pathway is amino-sugar metabolism; 1,6-anhydro-N-acetylmuramate degradation. The protein operates within cell wall biogenesis; peptidoglycan recycling. Its function is as follows. Catalyzes the specific phosphorylation of 1,6-anhydro-N-acetylmuramic acid (anhMurNAc) with the simultaneous cleavage of the 1,6-anhydro ring, generating MurNAc-6-P. Is required for the utilization of anhMurNAc either imported from the medium or derived from its own cell wall murein, and thus plays a role in cell wall recycling. This chain is Anhydro-N-acetylmuramic acid kinase, found in Pasteurella multocida (strain Pm70).